Here is a 228-residue protein sequence, read N- to C-terminus: 7-cyano-7-deazaguanine synthase (228 aa).

Position 11-21 (11-21 (LSGGLDSATVL)) interacts with ATP. Residues Cys191, Cys201, Cys204, and Cys207 each contribute to the Zn(2+) site.

The protein belongs to the QueC family. Zn(2+) is required as a cofactor.

It carries out the reaction 7-carboxy-7-deazaguanine + NH4(+) + ATP = 7-cyano-7-deazaguanine + ADP + phosphate + H2O + H(+). It participates in purine metabolism; 7-cyano-7-deazaguanine biosynthesis. Functionally, catalyzes the ATP-dependent conversion of 7-carboxy-7-deazaguanine (CDG) to 7-cyano-7-deazaguanine (preQ(0)). The protein is 7-cyano-7-deazaguanine synthase of Magnetococcus marinus (strain ATCC BAA-1437 / JCM 17883 / MC-1).